A 622-amino-acid chain; its full sequence is DNA-directed RNA polymerase subunit gamma (622 aa).

Residues cysteine 70, cysteine 72, cysteine 85, and cysteine 88 each contribute to the Zn(2+) site. Mg(2+) contacts are provided by aspartate 466, aspartate 468, and aspartate 470.

It belongs to the RNA polymerase beta' chain family. RpoC1 subfamily. In terms of assembly, in cyanobacteria the RNAP catalytic core is composed of 2 alpha, 1 beta, 1 beta', 1 gamma and 1 omega subunit. When a sigma factor is associated with the core the holoenzyme is formed, which can initiate transcription. It depends on Mg(2+) as a cofactor. Zn(2+) is required as a cofactor.

The enzyme catalyses RNA(n) + a ribonucleoside 5'-triphosphate = RNA(n+1) + diphosphate. In terms of biological role, DNA-dependent RNA polymerase catalyzes the transcription of DNA into RNA using the four ribonucleoside triphosphates as substrates. This is DNA-directed RNA polymerase subunit gamma from Thermosynechococcus vestitus (strain NIES-2133 / IAM M-273 / BP-1).